The sequence spans 269 residues: 4-hydroxy-tetrahydrodipicolinate reductase (269 aa).

NAD(+) is bound by residues 11-16 (GASGRM) and Glu37. Residue Arg38 participates in NADP(+) binding. Residues 101-103 (GTT) and 125-128 (AGNM) contribute to the NAD(+) site. His158 (proton donor/acceptor) is an active-site residue. His159 contacts (S)-2,3,4,5-tetrahydrodipicolinate. Lys162 acts as the Proton donor in catalysis. Residue 168-169 (GT) participates in (S)-2,3,4,5-tetrahydrodipicolinate binding.

It belongs to the DapB family.

Its subcellular location is the cytoplasm. It carries out the reaction (S)-2,3,4,5-tetrahydrodipicolinate + NAD(+) + H2O = (2S,4S)-4-hydroxy-2,3,4,5-tetrahydrodipicolinate + NADH + H(+). The enzyme catalyses (S)-2,3,4,5-tetrahydrodipicolinate + NADP(+) + H2O = (2S,4S)-4-hydroxy-2,3,4,5-tetrahydrodipicolinate + NADPH + H(+). It functions in the pathway amino-acid biosynthesis; L-lysine biosynthesis via DAP pathway; (S)-tetrahydrodipicolinate from L-aspartate: step 4/4. Catalyzes the conversion of 4-hydroxy-tetrahydrodipicolinate (HTPA) to tetrahydrodipicolinate. This Cereibacter sphaeroides (strain ATCC 17029 / ATH 2.4.9) (Rhodobacter sphaeroides) protein is 4-hydroxy-tetrahydrodipicolinate reductase.